The primary structure comprises 83 residues: Sec-independent protein translocase protein TatA (83 aa).

The chain crosses the membrane as a helical span at residues 2-22 (GLGGISIWQLLIVLVIVLLLF). 2 stretches are compositionally biased toward basic and acidic residues: residues 50 to 65 (AAKQ…KVAA) and 74 to 83 (AEQKEKTEAK). The tract at residues 50–83 (AAKQEAEEAEQKKVAAEEAAAAKTAEQKEKTEAK) is disordered.

Belongs to the TatA/E family. In terms of assembly, the Tat system comprises two distinct complexes: a TatABC complex, containing multiple copies of TatA, TatB and TatC subunits, and a separate TatA complex, containing only TatA subunits. Substrates initially bind to the TatABC complex, which probably triggers association of the separate TatA complex to form the active translocon.

It localises to the cell inner membrane. Its function is as follows. Part of the twin-arginine translocation (Tat) system that transports large folded proteins containing a characteristic twin-arginine motif in their signal peptide across membranes. TatA could form the protein-conducting channel of the Tat system. The protein is Sec-independent protein translocase protein TatA of Saccharophagus degradans (strain 2-40 / ATCC 43961 / DSM 17024).